The sequence spans 430 residues: RNA-binding protein 34 (430 aa).

Disordered stretches follow at residues 1–55 (MALE…GTGR), 72–123 (VPVP…ADRE), and 134–153 (EIHQ…VKVA). S14, S28, and S99 each carry phosphoserine. Residues 23–34 (DGVRGSPPEDYR) are compositionally biased toward basic and acidic residues. Basic and acidic residues predominate over residues 113–123 (TNAEKKLADRE). N6-acetyllysine is present on K151. 2 RRM domains span residues 185-280 (RTVF…LASE) and 287-364 (RSVF…RSVN). K242 participates in a covalent cross-link: Glycyl lysine isopeptide (Lys-Gly) (interchain with G-Cter in SUMO2). At S288 the chain carries Phosphoserine. Disordered regions lie at residues 365-395 (KEKF…KTAE) and 411-430 (KTKK…RKQK).

Belongs to the RRM RBM34 family.

It localises to the nucleus. The protein resides in the nucleolus. This Homo sapiens (Human) protein is RNA-binding protein 34 (RBM34).